A 904-amino-acid polypeptide reads, in one-letter code: Translation initiation factor IF-2 (904 aa).

2 disordered regions span residues 134 to 248 and 267 to 315; these read RQRN…GSHV and HLSA…FERP. Basic and acidic residues predominate over residues 136–177; it reads RNLDEQQRLAESDRVRDEEIQRKRDEEQAAKDRAEAERKAAE. Low complexity-rich tracts occupy residues 178–230 and 285–303; these read EAAA…STPA and GRPG…RGSN. One can recognise a tr-type G domain in the interval 403-572; it reads TRPPVVTIMG…SLQAEVLELK (170 aa). A G1 region spans residues 412-419; sequence GHVDHGKT. GTP is bound at residue 412–419; sequence GHVDHGKT. Residues 437–441 form a G2 region; that stretch reads GITQH. Residues 458-461 form a G3 region; that stretch reads DTPG. Residues 458 to 462 and 512 to 515 contribute to the GTP site; these read DTPGH and NKID. Residues 512-515 are G4; that stretch reads NKID. The segment at 548–550 is G5; the sequence is SAK.

It belongs to the TRAFAC class translation factor GTPase superfamily. Classic translation factor GTPase family. IF-2 subfamily.

The protein resides in the cytoplasm. Its function is as follows. One of the essential components for the initiation of protein synthesis. Protects formylmethionyl-tRNA from spontaneous hydrolysis and promotes its binding to the 30S ribosomal subunits. Also involved in the hydrolysis of GTP during the formation of the 70S ribosomal complex. This is Translation initiation factor IF-2 from Xanthomonas oryzae pv. oryzae (strain PXO99A).